The following is a 375-amino-acid chain: Serpin B5 (375 aa).

N-linked (GlcNAc...) asparagine glycans are attached at residues asparagine 99, asparagine 133, asparagine 188, and asparagine 361.

The protein belongs to the serpin family. Ov-serpin subfamily. Interacts with IRF6. Normal mammary epithelial cells.

It is found in the secreted. Its subcellular location is the extracellular space. Functionally, tumor suppressor. It blocks the growth, invasion, and metastatic properties of mammary tumors. As it does not undergo the S (stressed) to R (relaxed) conformational transition characteristic of active serpins, it exhibits no serine protease inhibitory activity. The polypeptide is Serpin B5 (SERPINB5) (Homo sapiens (Human)).